A 772-amino-acid chain; its full sequence is Mitochondrial intermediate peptidase (772 aa).

A mitochondrion-targeting transit peptide spans 1–33 (MLARPSTTVLARRPFFRFRGCLNEPRPTKARCL). Histidine 556 is a Zn(2+) binding site. Glutamate 557 is a catalytic residue. Zn(2+)-binding residues include histidine 560 and histidine 563.

The protein belongs to the peptidase M3 family. Zn(2+) is required as a cofactor.

The protein resides in the mitochondrion matrix. It catalyses the reaction Release of an N-terminal octapeptide as second stage of processing of some proteins imported into the mitochondrion.. In terms of biological role, cleaves proteins, imported into the mitochondrion, to their mature size. While most mitochondrial precursor proteins are processed to the mature form in one step by mitochondrial processing peptidase (MPP), the sequential cleavage by MIP of an octapeptide after initial processing by MPP is a required step for a subgroup of nuclear-encoded precursor proteins destined for the matrix or the inner membrane. This chain is Mitochondrial intermediate peptidase (OCT1), found in Coprinopsis scobicola (Ink cap fungus).